Here is a 141-residue protein sequence, read N- to C-terminus: Hemoglobin subunit alpha-D (141 aa).

A Globin domain is found at 1-141; it reads MLTAEDKKLI…VSAVLAEKYR (141 aa). 2 residues coordinate heme b: H58 and H87.

It belongs to the globin family. As to quaternary structure, heterotetramer of two alpha-D chains and two beta chains. In terms of tissue distribution, red blood cells.

Involved in oxygen transport from the lung to the various peripheral tissues. This Meleagris gallopavo (Wild turkey) protein is Hemoglobin subunit alpha-D (HBAD).